The primary structure comprises 206 residues: Putative type I restriction enzyme MpnIIP endonuclease subunit C-terminal part (206 aa).

Functionally, the C-terminal section of a putative type I restriction enzyme that if reconstituted might recognize 5'-GAN(7)TAY-3' and cleave a random distance away. Subunit R is required for both nuclease and ATPase activities, but not for modification. This chain is Putative type I restriction enzyme MpnIIP endonuclease subunit C-terminal part, found in Mycoplasma pneumoniae (strain ATCC 29342 / M129 / Subtype 1) (Mycoplasmoides pneumoniae).